The sequence spans 337 residues: Glyceraldehyde-3-phosphate dehydrogenase 3, cytosolic (337 aa).

NAD(+)-binding positions include 13 to 14, Asp-35, and Arg-82; that span reads RI. D-glyceraldehyde 3-phosphate is bound by residues 153–155, Thr-184, 213–214, and Arg-236; these read SCT and TG. The active-site Nucleophile is Cys-154. Residue Asn-318 coordinates NAD(+).

Belongs to the glyceraldehyde-3-phosphate dehydrogenase family. As to quaternary structure, homotetramer.

It localises to the cytoplasm. The catalysed reaction is D-glyceraldehyde 3-phosphate + phosphate + NAD(+) = (2R)-3-phospho-glyceroyl phosphate + NADH + H(+). It functions in the pathway carbohydrate degradation; glycolysis; pyruvate from D-glyceraldehyde 3-phosphate: step 1/5. Key enzyme in glycolysis that catalyzes the first step of the pathway by converting D-glyceraldehyde 3-phosphate (G3P) into 3-phospho-D-glyceroyl phosphate. Essential for the maintenance of cellular ATP levels and carbohydrate metabolism. This Oryza sativa subsp. japonica (Rice) protein is Glyceraldehyde-3-phosphate dehydrogenase 3, cytosolic (GAPC3).